A 283-amino-acid chain; its full sequence is MLIHPQFDPVAIHLGPLAVHWYGLMYLLGFALFLTMGKYRLKNGNDVLTVPQLDDMLMYGAVGVVVGGRLGEVLFYQPGYYFSHPLEIFMVWKGGMSFHGGFLGVLIAVAIYGRKVGRGFWQLTDFVAPLVPLGLAAGRVGNFINGELWGRVASPELPWAMLFPQARMEDIAEAQQSADLMNMLMQYGGLLRHPSQLYEFALEGIVLFGALWIYSAKPRATGKVSALFLIGYGLARFVSEYFRNPDAGIFGKSDVISMGQWLSLPMIVIGVALLVFFGRRKQG.

Transmembrane regions (helical) follow at residues 14 to 34 (LGPL…ALFL), 56 to 76 (MLMY…VLFY), and 88 to 108 (IFMV…VLIA). An a 1,2-diacyl-sn-glycero-3-phospho-(1'-sn-glycerol)-binding site is contributed by R139. A helical membrane pass occupies residues 258-278 (MGQWLSLPMIVIGVALLVFFG).

It belongs to the Lgt family.

Its subcellular location is the cell inner membrane. It carries out the reaction L-cysteinyl-[prolipoprotein] + a 1,2-diacyl-sn-glycero-3-phospho-(1'-sn-glycerol) = an S-1,2-diacyl-sn-glyceryl-L-cysteinyl-[prolipoprotein] + sn-glycerol 1-phosphate + H(+). The protein operates within protein modification; lipoprotein biosynthesis (diacylglyceryl transfer). Catalyzes the transfer of the diacylglyceryl group from phosphatidylglycerol to the sulfhydryl group of the N-terminal cysteine of a prolipoprotein, the first step in the formation of mature lipoproteins. The protein is Phosphatidylglycerol--prolipoprotein diacylglyceryl transferase of Chromobacterium violaceum (strain ATCC 12472 / DSM 30191 / JCM 1249 / CCUG 213 / NBRC 12614 / NCIMB 9131 / NCTC 9757 / MK).